The primary structure comprises 47 residues: PhoP/PhoQ regulator MgrB (47 aa).

The chain crosses the membrane as a helical span at residues 6–26; sequence WVILIIVLIACVILWTQTINV.

It belongs to the MgrB family. In terms of assembly, may form homooligomers. Probably interacts with the periplasmic domain of PhoQ.

It localises to the cell inner membrane. Its function is as follows. PhoP-regulated transcription is redox-sensitive, being activated when the periplasm becomes more reducing. MgrB acts between DsbA/DsbB and PhoP/PhoQ in this pathway. Represses PhoP/PhoQ signaling, possibly by binding to the periplasmic domain of PhoQ, altering its activity and that of downstream effector PhoP. The sequence is that of PhoP/PhoQ regulator MgrB from Enterobacter sp. (strain 638).